A 443-amino-acid polypeptide reads, in one-letter code: UDP-glucuronic acid decarboxylase 4 (443 aa).

Ala-2 carries the N-acetylalanine modification. At 2–43 the chain is on the cytoplasmic side; the sequence is ASELTNRRHEIEQPEAESYYPKPIKPWFVAIRPIRYMLREQR. The chain crosses the membrane as a helical; Signal-anchor for type II membrane protein span at residues 44–64; that stretch reads LVFVLVGIAIATLGFTIFSKS. Residues 65-443 are Lumenal-facing; it reads SNHQPIPYDV…DSSTTSSSTE (379 aa). 151 to 176 contributes to the NAD(+) binding site; the sequence is DNFFTGRKENVMHHFNNPNFEMIRHD. Position 260 (Arg-260) interacts with substrate. The active-site Proton acceptor is Tyr-263. An NAD(+)-binding site is contributed by 263–267; it reads YDEGK. Residue Asn-292 coordinates substrate. Arg-304 is an NAD(+) binding site. Substrate is bound by residues 305-309, 322-329, and 389-393; these read VVSNF, YGDGKQTR, and DPHKR.

Belongs to the NAD(P)-dependent epimerase/dehydratase family. UDP-glucuronic acid decarboxylase subfamily. It depends on NAD(+) as a cofactor.

The protein resides in the golgi apparatus. It localises to the golgi stack membrane. The catalysed reaction is UDP-alpha-D-glucuronate + H(+) = UDP-alpha-D-xylose + CO2. Its pathway is nucleotide-sugar biosynthesis; UDP-alpha-D-xylose biosynthesis; UDP-alpha-D-xylose from UDP-alpha-D-glucuronate: step 1/1. Catalyzes the NAD-dependent decarboxylation of UDP-glucuronic acid to UDP-xylose. Necessary for the biosynthesis of the core tetrasaccharide in glycosaminoglycan biosynthesis. This Arabidopsis thaliana (Mouse-ear cress) protein is UDP-glucuronic acid decarboxylase 4 (UXS4).